A 36-amino-acid polypeptide reads, in one-letter code: Pancreatic polypeptide (36 aa).

Tyr36 is modified (tyrosine amide).

This sequence belongs to the NPY family.

It localises to the secreted. Hormone secreted by pancreatic cells that acts as a regulator of pancreatic and gastrointestinal functions probably by signaling through the G protein-coupled receptor NPY4R2. This is Pancreatic polypeptide (PPY) from Didelphis virginiana (North American opossum).